A 212-amino-acid chain; its full sequence is 3-oxo-tetronate 4-phosphate decarboxylase (212 aa).

Glu-79 serves as the catalytic Proton acceptor. The Zn(2+) site is built by Glu-79, His-98, and His-100. Tyr-125 acts as the Proton donor in catalysis. Residue His-165 coordinates Zn(2+).

It belongs to the aldolase class II family. AraD/FucA subfamily. Zn(2+) is required as a cofactor.

The enzyme catalyses 3-dehydro-4-O-phospho-D-erythronate + H(+) = dihydroxyacetone phosphate + CO2. The catalysed reaction is 3-dehydro-4-O-phospho-L-erythronate + H(+) = dihydroxyacetone phosphate + CO2. Its function is as follows. Catalyzes the decarboxylation of 3-oxo-tetronate 4-phosphate to dihydroxyacetone phosphate (DHAP) and CO(2). This is 3-oxo-tetronate 4-phosphate decarboxylase from Escherichia coli (strain K12).